Reading from the N-terminus, the 206-residue chain is Small ribosomal subunit protein uS4 (206 aa).

The region spanning glycine 96–lysine 156 is the S4 RNA-binding domain.

Belongs to the universal ribosomal protein uS4 family. In terms of assembly, part of the 30S ribosomal subunit. Contacts protein S5. The interaction surface between S4 and S5 is involved in control of translational fidelity.

In terms of biological role, one of the primary rRNA binding proteins, it binds directly to 16S rRNA where it nucleates assembly of the body of the 30S subunit. With S5 and S12 plays an important role in translational accuracy. The sequence is that of Small ribosomal subunit protein uS4 from Actinobacillus succinogenes (strain ATCC 55618 / DSM 22257 / CCUG 43843 / 130Z).